The sequence spans 475 residues: Ankyrin repeat, SAM and basic leucine zipper domain-containing protein 1 (475 aa).

Over residues 1 to 10 (MAAGALRGLA) the composition is skewed to low complexity. The segment at 1 to 23 (MAAGALRGLAVAGGGESSESEDD) is disordered. 3 positions are modified to phosphoserine: S17, S18, and S20. ANK repeat units follow at residues 45 to 74 (EKNE…SVDS), 78 to 107 (YGWT…NASF), 110 to 144 (DKQT…DPNV), 148 to 177 (RLMT…EVNT), 181 to 210 (NGYT…NKML), and 214 to 243 (DGKI…PLEG). In terms of domain architecture, SAM spans 272-334 (SYTAFGDLEI…KILSALKELE (63 aa)).

As to quaternary structure, interacts with DDX4, PIWIL1, RANBP9 and TDRD1.

It is found in the cytoplasm. Its function is as follows. Plays a central role during spermatogenesis by repressing transposable elements and preventing their mobilization, which is essential for the germline integrity. Acts via the piRNA metabolic process, which mediates the repression of transposable elements during meiosis by forming complexes composed of piRNAs and Piwi proteins and governs the methylation and subsequent repression of transposons. Its association with pi-bodies suggests a participation in the primary piRNAs metabolic process. Required prior to the pachytene stage to facilitate the production of multiple types of piRNAs, including those associated with repeats involved in the regulation of retrotransposons. May act by mediating protein-protein interactions during germ cell maturation. This chain is Ankyrin repeat, SAM and basic leucine zipper domain-containing protein 1 (ASZ1), found in Otolemur garnettii (Small-eared galago).